The sequence spans 491 residues: D-xylose-proton symporter (491 aa).

The Cytoplasmic portion of the chain corresponds to 1-9 (MNTQYNSSY). Residues 10 to 30 (IFSITLVATLGGLLFGYDTAV) traverse the membrane as a helical segment. Over 31-55 (ISGTVESLNTVFVAPQNLSESAANS) the chain is Periplasmic. The helical transmembrane segment at 56–76 (LLGFCVASALIGCIIGGALGG) threads the bilayer. The Cytoplasmic portion of the chain corresponds to 77–89 (YCSNRFGRRDSLK). A helical transmembrane segment spans residues 90-110 (IAAVLFFISGVGSAWPELGFT). The Periplasmic portion of the chain corresponds to 111–133 (SINPDNTVPVYLAGYVPEFVIYR). Residues 134–154 (IIGGIGVGLASMLSPMYIAEL) traverse the membrane as a helical segment. The Cytoplasmic portion of the chain corresponds to 155–165 (APAHIRGKLVS). Residues 166–186 (FNQFAIIFGQLLVYCVNYFIA) traverse the membrane as a helical segment. Glutamine 168 is a beta-D-xylose binding site. Topologically, residues 187 to 200 (RSGDASWLNTDGWR) are periplasmic. The chain crosses the membrane as a helical span at residues 201–221 (YMFASECIPALLFLMLLYTVP). The Cytoplasmic portion of the chain corresponds to 222–272 (ESPRWLMSRGKQEQAEGILRKIMGNTLATQAVQEIKHSLDHGRKTGGRLLM). The chain crosses the membrane as a helical span at residues 273–293 (FGVGVIVIGVMLSIFQQFVGI). Residues 288–289 (QQ) and asparagine 294 contribute to the beta-D-xylose site. Residues 294-312 (NVVLYYAPEVFKTLGASTD) lie on the Periplasmic side of the membrane. A helical transmembrane segment spans residues 313–333 (IALLQTIIVGVINLTFTVLAI). At 334 to 343 (MTVDKFGRKP) the chain is on the cytoplasmic side. A helical transmembrane segment spans residues 344–364 (LQIIGALGMAIGMFSLGTAFY). Residues 365-369 (TQAPG) lie on the Periplasmic side of the membrane. Residues 370–390 (IVALLSMLFYVAAFAMSWGPV) traverse the membrane as a helical segment. At 391 to 407 (CWVLLSEIFPNAIRGKA) the chain is on the cytoplasmic side. Beta-D-xylose contacts are provided by tryptophan 392 and glutamine 415. Residues 408 to 428 (LAIAVAAQWLANYFVSWTFPM) form a helical membrane-spanning segment. Over 429 to 442 (MDKNSWLVAHFHNG) the chain is Periplasmic. A helical transmembrane segment spans residues 443–463 (FSYWIYGCMGVLAALFMWKFV). Residues 464 to 491 (PETKGKTLEELEALWEPETKKTQQTATL) are Cytoplasmic-facing.

It belongs to the major facilitator superfamily. Sugar transporter (TC 2.A.1.1) family.

The protein localises to the cell inner membrane. It catalyses the reaction D-xylose(in) + H(+)(in) = D-xylose(out) + H(+)(out). Uptake of D-xylose across the boundary membrane with the concomitant transport of protons into the cell (symport system). This chain is D-xylose-proton symporter (xylE), found in Escherichia coli O157:H7.